We begin with the raw amino-acid sequence, 444 residues long: Tubulin beta chain (444 aa).

Positions 11, 69, 138, 142, 143, 144, 204, and 226 each coordinate GTP. Glu69 provides a ligand contact to Mg(2+).

Belongs to the tubulin family. In terms of assembly, dimer of alpha and beta chains. A typical microtubule is a hollow water-filled tube with an outer diameter of 25 nm and an inner diameter of 15 nM. Alpha-beta heterodimers associate head-to-tail to form protofilaments running lengthwise along the microtubule wall with the beta-tubulin subunit facing the microtubule plus end conferring a structural polarity. Microtubules usually have 13 protofilaments but different protofilament numbers can be found in some organisms and specialized cells. Mg(2+) serves as cofactor.

It is found in the cytoplasm. The protein resides in the cytoskeleton. Its function is as follows. Tubulin is the major constituent of microtubules, a cylinder consisting of laterally associated linear protofilaments composed of alpha- and beta-tubulin heterodimers. Microtubules grow by the addition of GTP-tubulin dimers to the microtubule end, where a stabilizing cap forms. Below the cap, tubulin dimers are in GDP-bound state, owing to GTPase activity of alpha-tubulin. The chain is Tubulin beta chain (TBB) from Onchocerca gibsoni.